We begin with the raw amino-acid sequence, 287 residues long: Cell wall-binding protein YocH (287 aa).

The signal sequence occupies residues Met1–Ala25. 2 LysM domains span residues Lys26–Ile69 and Gly78–Val121. Over residues Thr130–Ala143 the composition is skewed to low complexity. The disordered stretch occupies residues Thr130–Lys193. Residues Gln165–Ala181 show a composition bias toward basic and acidic residues. A compositionally biased stretch (polar residues) spans Val182–Lys193.

Its subcellular location is the secreted. The protein localises to the cell wall. In Bacillus subtilis (strain 168), this protein is Cell wall-binding protein YocH (yocH).